The following is a 189-amino-acid chain: GTPase NRas (189 aa).

Gly-10–Ser-17 provides a ligand contact to GTP. The short motif at Tyr-32–Tyr-40 is the Effector region element. GTP-binding positions include Asp-57–Gln-61 and Asn-116–Asp-119. Positions Tyr-166–Ser-185 are hypervariable region. Cys-181 carries S-palmitoyl cysteine lipidation. A lipid anchor (S-farnesyl cysteine) is attached at Cys-186. A propeptide spans Ile-187–Met-189 (removed in mature form).

This sequence belongs to the small GTPase superfamily. Ras family. Post-translationally, palmitoylated by the ZDHHC9-GOLGA7 complex. Depalmitoylated by ABHD17A, ABHD17B and ABHD17C. A continuous cycle of de- and re-palmitoylation regulates rapid exchange between plasma membrane and Golgi.

The protein resides in the cell membrane. It localises to the golgi apparatus membrane. It catalyses the reaction GTP + H2O = GDP + phosphate + H(+). Alternates between an inactive form bound to GDP and an active form bound to GTP. Activated by a guanine nucleotide-exchange factor (GEF) and inactivated by a GTPase-activating protein (GAP). In terms of biological role, ras proteins bind GDP/GTP and possess intrinsic GTPase activity. The polypeptide is GTPase NRas (NRAS) (Gallus gallus (Chicken)).